We begin with the raw amino-acid sequence, 121 residues long: Large ribosomal subunit protein uL24 (121 aa).

The protein belongs to the universal ribosomal protein uL24 family. Part of the 50S ribosomal subunit.

Its function is as follows. One of two assembly initiator proteins, it binds directly to the 5'-end of the 23S rRNA, where it nucleates assembly of the 50S subunit. In terms of biological role, located at the polypeptide exit tunnel on the outside of the subunit. This chain is Large ribosomal subunit protein uL24, found in Pyrococcus abyssi (strain GE5 / Orsay).